The following is a 100-amino-acid chain: MELLPREKDKLLVFTAALLAERRLNRGLKLNYPEAMAFITMEIIEGARDGKTVAELMAYGKTLLSAEQVMDGVVELIHEVQVEATFPDGTKLVTVHNPIN.

It belongs to the urease gamma subunit family. In terms of assembly, heterotrimer of UreA (gamma), UreB (beta) and UreC (alpha) subunits. Three heterotrimers associate to form the active enzyme.

It is found in the cytoplasm. The catalysed reaction is urea + 2 H2O + H(+) = hydrogencarbonate + 2 NH4(+). It participates in nitrogen metabolism; urea degradation; CO(2) and NH(3) from urea (urease route): step 1/1. The sequence is that of Urease subunit gamma from Marinomonas sp. (strain MWYL1).